A 90-amino-acid polypeptide reads, in one-letter code: UPF0367 protein PMT9312_0127 (90 aa).

The protein belongs to the UPF0367 family.

The sequence is that of UPF0367 protein PMT9312_0127 from Prochlorococcus marinus (strain MIT 9312).